Consider the following 73-residue polypeptide: Large ribosomal subunit protein uL29 (73 aa).

Belongs to the universal ribosomal protein uL29 family.

This chain is Large ribosomal subunit protein uL29 (rpl29), found in Saccharolobus solfataricus (strain ATCC 35092 / DSM 1617 / JCM 11322 / P2) (Sulfolobus solfataricus).